Consider the following 447-residue polypeptide: Imidazolonepropionase (447 aa).

Residues H85 and H87 each contribute to the Fe(3+) site. Positions 85 and 87 each coordinate Zn(2+). 4-imidazolone-5-propanoate contacts are provided by R94, Y157, and H190. Y157 is an N-formimidoyl-L-glutamate binding site. Residue H255 participates in Fe(3+) binding. Zn(2+) is bound at residue H255. E258 contacts 4-imidazolone-5-propanoate. Residue D329 coordinates Fe(3+). D329 is a binding site for Zn(2+). N331 and G333 together coordinate N-formimidoyl-L-glutamate. A 4-imidazolone-5-propanoate-binding site is contributed by S334.

It belongs to the metallo-dependent hydrolases superfamily. HutI family. It depends on Zn(2+) as a cofactor. Requires Fe(3+) as cofactor.

It localises to the cytoplasm. It carries out the reaction 4-imidazolone-5-propanoate + H2O = N-formimidoyl-L-glutamate. It functions in the pathway amino-acid degradation; L-histidine degradation into L-glutamate; N-formimidoyl-L-glutamate from L-histidine: step 3/3. In terms of biological role, catalyzes the hydrolytic cleavage of the carbon-nitrogen bond in imidazolone-5-propanoate to yield N-formimidoyl-L-glutamate. It is the third step in the universal histidine degradation pathway. This chain is Imidazolonepropionase, found in Shouchella clausii (strain KSM-K16) (Alkalihalobacillus clausii).